We begin with the raw amino-acid sequence, 174 residues long: NADH-ubiquinone oxidoreductase chain 6 (174 aa).

The next 5 helical transmembrane spans lie at Leu4–Leu24, Ser25–Val45, Phe48–Tyr68, Phe82–Ile102, and Leu143–Thr163.

The protein belongs to the complex I subunit 6 family.

It is found in the mitochondrion membrane. The enzyme catalyses a ubiquinone + NADH + 5 H(+)(in) = a ubiquinol + NAD(+) + 4 H(+)(out). Its function is as follows. Core subunit of the mitochondrial membrane respiratory chain NADH dehydrogenase (Complex I) that is believed to belong to the minimal assembly required for catalysis. Complex I functions in the transfer of electrons from NADH to the respiratory chain. The immediate electron acceptor for the enzyme is believed to be ubiquinone. In Anopheles quadrimaculatus (Common malaria mosquito), this protein is NADH-ubiquinone oxidoreductase chain 6 (ND6).